Consider the following 195-residue polypeptide: Imidazoleglycerol-phosphate dehydratase (195 aa).

The protein belongs to the imidazoleglycerol-phosphate dehydratase family.

Its subcellular location is the cytoplasm. The catalysed reaction is D-erythro-1-(imidazol-4-yl)glycerol 3-phosphate = 3-(imidazol-4-yl)-2-oxopropyl phosphate + H2O. It functions in the pathway amino-acid biosynthesis; L-histidine biosynthesis; L-histidine from 5-phospho-alpha-D-ribose 1-diphosphate: step 6/9. The sequence is that of Imidazoleglycerol-phosphate dehydratase from Burkholderia vietnamiensis (strain G4 / LMG 22486) (Burkholderia cepacia (strain R1808)).